A 276-amino-acid chain; its full sequence is 2,3,4,5-tetrahydropyridine-2,6-dicarboxylate N-succinyltransferase (276 aa).

Residues R100 and D137 each contribute to the substrate site.

It belongs to the transferase hexapeptide repeat family. As to quaternary structure, homotrimer.

The protein resides in the cytoplasm. It catalyses the reaction (S)-2,3,4,5-tetrahydrodipicolinate + succinyl-CoA + H2O = (S)-2-succinylamino-6-oxoheptanedioate + CoA. Its pathway is amino-acid biosynthesis; L-lysine biosynthesis via DAP pathway; LL-2,6-diaminopimelate from (S)-tetrahydrodipicolinate (succinylase route): step 1/3. The protein is 2,3,4,5-tetrahydropyridine-2,6-dicarboxylate N-succinyltransferase of Zymomonas mobilis subsp. mobilis (strain ATCC 31821 / ZM4 / CP4).